The chain runs to 239 residues: tRNA (guanine-N(7)-)-methyltransferase (239 aa).

Residues glutamate 68, glutamate 93, aspartate 120, and aspartate 143 each coordinate S-adenosyl-L-methionine. The active site involves aspartate 143. Residues lysine 147, aspartate 180, and 217 to 220 (TKFE) contribute to the substrate site.

This sequence belongs to the class I-like SAM-binding methyltransferase superfamily. TrmB family.

It catalyses the reaction guanosine(46) in tRNA + S-adenosyl-L-methionine = N(7)-methylguanosine(46) in tRNA + S-adenosyl-L-homocysteine. It participates in tRNA modification; N(7)-methylguanine-tRNA biosynthesis. Functionally, catalyzes the formation of N(7)-methylguanine at position 46 (m7G46) in tRNA. In Vibrio parahaemolyticus serotype O3:K6 (strain RIMD 2210633), this protein is tRNA (guanine-N(7)-)-methyltransferase.